We begin with the raw amino-acid sequence, 247 residues long: tRNA pseudouridine synthase A (247 aa).

Asp52 (nucleophile) is an active-site residue. A substrate-binding site is contributed by Tyr110.

The protein belongs to the tRNA pseudouridine synthase TruA family. In terms of assembly, homodimer.

The enzyme catalyses uridine(38/39/40) in tRNA = pseudouridine(38/39/40) in tRNA. Its function is as follows. Formation of pseudouridine at positions 38, 39 and 40 in the anticodon stem and loop of transfer RNAs. This Geobacter sp. (strain M21) protein is tRNA pseudouridine synthase A.